Consider the following 182-residue polypeptide: uncharacterized protein (182 aa).

Positions 36–164 (LRHRATYIVV…TPDSLKALSL (129 aa)) constitute a Nudix hydrolase domain. Positions 73–95 (GGVVQSGENYLESARREAEEELG) match the Nudix box motif. Glutamate 89 and glutamate 93 together coordinate Mg(2+).

Belongs to the Nudix hydrolase family. Mg(2+) is required as a cofactor.

This is an uncharacterized protein from Yersinia pestis.